The primary structure comprises 122 residues: Large ribosomal subunit protein uL14c (122 aa).

The protein belongs to the universal ribosomal protein uL14 family. As to quaternary structure, part of the 50S ribosomal subunit.

The protein resides in the plastid. Functionally, binds to 23S rRNA. This chain is Large ribosomal subunit protein uL14c, found in Cuscuta exaltata (Tall dodder).